Consider the following 119-residue polypeptide: Large ribosomal subunit protein uL14 (119 aa).

The protein belongs to the universal ribosomal protein uL14 family. As to quaternary structure, part of the 50S ribosomal subunit. Forms a cluster with proteins L3 and L19. In the 70S ribosome, L14 and L19 interact and together make contacts with the 16S rRNA in bridges B5 and B8.

Functionally, binds to 23S rRNA. Forms part of two intersubunit bridges in the 70S ribosome. In Wolbachia pipientis wMel, this protein is Large ribosomal subunit protein uL14.